Consider the following 153-residue polypeptide: Transcriptional repressor NrdR (153 aa).

The disordered stretch occupies residues methionine 1–glycine 22. The segment at cysteine 3 to cysteine 34 is a zinc-finger region. Residues leucine 49–valine 139 enclose the ATP-cone domain.

It belongs to the NrdR family. Zn(2+) serves as cofactor.

Negatively regulates transcription of bacterial ribonucleotide reductase nrd genes and operons by binding to NrdR-boxes. In Halalkalibacterium halodurans (strain ATCC BAA-125 / DSM 18197 / FERM 7344 / JCM 9153 / C-125) (Bacillus halodurans), this protein is Transcriptional repressor NrdR.